A 662-amino-acid chain; its full sequence is Transketolase (662 aa).

Residue His-28 participates in substrate binding. Thiamine diphosphate-binding positions include His-68 and 115 to 117 (GPL). Residue Asp-156 coordinates Mg(2+). Residues Gly-157 and Asn-186 each contribute to the thiamine diphosphate site. Asn-186 and Ile-188 together coordinate Mg(2+). Residues His-261, Arg-356, and Ser-383 each coordinate substrate. Position 261 (His-261) interacts with thiamine diphosphate. Residue Glu-410 is the Proton donor of the active site. Phe-436 is a thiamine diphosphate binding site. Substrate is bound by residues His-460, Asp-468, and Arg-519.

This sequence belongs to the transketolase family. Homodimer. Mg(2+) is required as a cofactor. The cofactor is Ca(2+). It depends on Mn(2+) as a cofactor. Requires Co(2+) as cofactor. Thiamine diphosphate serves as cofactor.

It carries out the reaction D-sedoheptulose 7-phosphate + D-glyceraldehyde 3-phosphate = aldehydo-D-ribose 5-phosphate + D-xylulose 5-phosphate. It functions in the pathway carbohydrate biosynthesis; Calvin cycle. Its pathway is carbohydrate degradation; pentose phosphate pathway. In terms of biological role, catalyzes the transfer of a two-carbon ketol group from a ketose donor to an aldose acceptor, via a covalent intermediate with the cofactor thiamine pyrophosphate. This is Transketolase (tkt) from Staphylococcus epidermidis (strain ATCC 35984 / DSM 28319 / BCRC 17069 / CCUG 31568 / BM 3577 / RP62A).